We begin with the raw amino-acid sequence, 418 residues long: uncharacterized protein (418 aa).

In terms of domain architecture, N-acetyltransferase spans 7–158; that stretch reads IDVRPIAEAE…TGLDPRWSGP (152 aa). Acetyl-CoA is bound by residues 87-89 and 95-100; these read VTV and RRGLLT. Catalysis depends on Tyr128, which acts as the Proton donor. Residue Phe418 is the Proton acceptor; via carboxylate of the active site.

The protein belongs to the acetyltransferase Eis family. Homohexamer; trimer of dimers.

This is an uncharacterized protein from Streptomyces avermitilis (strain ATCC 31267 / DSM 46492 / JCM 5070 / NBRC 14893 / NCIMB 12804 / NRRL 8165 / MA-4680).